A 1251-amino-acid chain; its full sequence is MGQSKRPFKNKEEKKSRGFGRSRHDDAGAGGRPQVKKAVFESTKKKEIGVSDLTLLSKVSNEAINENLKKRFEHGEIYTYIGHVLVSVNPFRDLGIYTDKVLESYRGKNRLEVPPHVFAVAEAGYYNMKAYKENQCVIISGESGAGKTEAAKRLMQYIANVSGGTDSSIQQTKDMVLATNPLLESFGNAKTLRNNNSSRFGKYLELQFNSVGEPVGATITNYLLEKSRVVGQIKNERNFHIFYQFTKAAPQSYRDAFGIQQPQSYVYTSRSQCFDVAGMNDAADFNETIEAMRIIGLRQAEQDNIFRVLSAILWLGNMQFQEDDHSNASINDQSIIDFVAYLLEVDAEGVQKALTQRIVETARGGRRGSIYEVPLNTVQATAVRDALAKALYFNLFDWIVQRVNASLTAKGTVTNTIGILDIYGFEIFERNSFEQLCINYVNEKLQQIFIQLTLKTEQEEYAREQIKWTPIKYFDNKVVCQLIEDKRPPGVFAALNDACATAHADSGAADQTFVGRLNFLSQNPNFESRQGQFIVKHYAGDVAYAVEGMTDKNKDQLLKDLLNLVNSSTNSFLHTLFPNRVNQDDKRRPPTAGDKIKASANDLVTTLAKAQPSYIRTIKPNDNKSPSEYNVANVIHQIKYLGLQENVRIRRAGFAYRQTFEKFVERFYLLSPKTSYAGEYTWTGDAESGARQILKDTSIPPEEYQMGVAKAFIKTPETLFALEHMRDRYWHNMATRIQRAWRNYLRYRTECAIRIQRFWRRVTGGLEFIKLRDQGHKILGGRKERRRYSLVGSRRFLGDYLGISNAGDMGDVIKSSINISSGENILYSCRCELLVTKFGRSSKPSPRLLILTSRNVYVVVQKFVNNQLSILAERMIPIGAIKFVSTSNLKDDWFSIGVGAQQEPDPLISCVFKTEFFTYLTNALRGQLNLRIGETIEYNKKPGKLAVVKAVKDPAVPRDDVYKSGTIRTGPGEPANSVSKPTPRPKQVPGKPITKGKLLRPGGPGGGPSKLAPRPKPVAQNLPENPRAAKQPAGEKFKPVAQSVTAVAAAHARTNSGSQNRPPPPPPPTQPPAPKKDTAKALYDFDSGRSNELPLRKGEIVQVVTKESNGWWLCMNLETSAQGWAPEAYLEPIVAKTPSLPPPPPSLPPQSKSAVSNTLPNGPSRVNGAAAKAKPAPPAPPFKRPDINRKAAPAAAPRDSAVSMNSHESPAGSGRATPSSLSNASIAGGLAEALRARQSAMQGKEQDDDDW.

The tract at residues 1 to 37 is disordered; it reads MGQSKRPFKNKEEKKSRGFGRSRHDDAGAGGRPQVKK. The segment covering 9-27 has biased composition (basic and acidic residues); it reads KNKEEKKSRGFGRSRHDDA. Positions 48–727 constitute a Myosin motor domain; that stretch reads IGVSDLTLLS…TLFALEHMRD (680 aa). Residue 141–148 coordinates ATP; it reads GESGAGKT. Ser-369 carries the phosphoserine modification. Residues 416 to 498 are actin-binding; that stretch reads TIGILDIYGF…PGVFAALNDA (83 aa). 2 consecutive IQ domains span residues 731-751 and 752-777; these read HNMA…RTEC and AIRI…QGHK. The TH1 domain maps to 785 to 980; that stretch reads RRRYSLVGSR…PGEPANSVSK (196 aa). Disordered stretches follow at residues 958–1093 and 1135–1227; these read RDDV…SNEL and AKTP…ASIA. Residues 1040–1052 show a composition bias toward low complexity; it reads VAQSVTAVAAAHA. The segment covering 1061–1073 has biased composition (pro residues); that stretch reads RPPPPPPPTQPPA. Positions 1074-1135 constitute an SH3 domain; it reads PKKDTAKALY…PEAYLEPIVA (62 aa). The segment covering 1139 to 1148 has biased composition (pro residues); that stretch reads SLPPPPPSLP. Polar residues-rich tracts occupy residues 1150-1161 and 1216-1225; these read QSKSAVSNTLPN and ATPSSLSNAS.

This sequence belongs to the TRAFAC class myosin-kinesin ATPase superfamily. Myosin family. Post-translationally, phosphorylation of the TEDS site (Ser-369) is required for the polarization of the actin cytoskeleton. Phosphorylation probably activates the myosin-I ATPase activity.

Its subcellular location is the cytoplasm. It localises to the cytoskeleton. The protein localises to the actin patch. Functionally, type-I myosin implicated in the organization of the actin cytoskeleton. Required for proper actin cytoskeleton polarization. At the cell cortex, assembles in patch-like structures together with proteins from the actin-polymerizing machinery and promotes actin assembly. Functions as actin nucleation-promoting factor (NPF) for the Arp2/3 complex. The protein is Myosin-1 (MYO1) of Coccidioides immitis (strain RS) (Valley fever fungus).